The primary structure comprises 297 residues: MFEVEYLIKDCDDVNKNTLEQEFQDLNIEDWKWDAATGQLIVKGSVSPSKVLRRLENATSKPILIRGASNKESGVSILYEANEDITQIPKVYGLCRFIPTEEKIFLDLIATQLLPNREYTGLVTISGDISRGLKSAGDSLVTLFNANSNEQGKIVLDKEVSGSLPNWIGHCFVLKCVDDSDSATMGIISRSAGLGQNTKQICACTGKSLWTEHAELKSVNEGSSCCSKKDSSPSEKPSCCSQEKKSCCSSKKPSCCSQEKKGCCSTEKTSCCSQEKKSCCTSEKPSCCSNGKSTVCA.

Cys11 is a binding site for Cu cation. Positions Gly222 to Cys263 are disordered. Over residues Ser234–Ser257 the composition is skewed to low complexity.

This sequence belongs to the CCS1 family.

It is found in the cytoplasm. In terms of biological role, copper chaperone for superoxide dismutase 1 (sod1). Binds copper ions and delivers them specifically to sod1. Also has a role in cell protection against copper ion toxicity during conditions of copper excess. The C-terminal region is thought to act specifically in this sequestration role. In Schizosaccharomyces pombe (strain 972 / ATCC 24843) (Fission yeast), this protein is Superoxide dismutase 1 copper chaperone (ccs1).